The sequence spans 331 residues: Mitochondrial carrier protein CoAc1 (331 aa).

6 helical membrane-spanning segments follow: residues Leu16–Ile36, Phe79–Met99, Leu123–Ala143, Gly193–Glu213, Leu231–Val251, and Phe292–Val312. Solcar repeat units follow at residues Pro21–Trp107, Ser117–His218, and Asn225–Trp319.

Belongs to the mitochondrial carrier (TC 2.A.29) family. Expressed throughout the plant.

The protein resides in the mitochondrion inner membrane. Required for the accumulation of coenzyme A in the mitochondrial matrix. The sequence is that of Mitochondrial carrier protein CoAc1 from Arabidopsis thaliana (Mouse-ear cress).